The chain runs to 145 residues: MLSSKNVVVVEAWNTTTTTQTQTPHRPSLLHPTFYWGYNCQVLFSGWPGSDRGMYALALIFVFFLAFLAEWLARCSDASSIKQGADKLAKVAFRTAMYTVKSGFSYLVILAVVSFNGGVFLAAIFGHALGFAVFRGRAFRNRDIQ.

Transmembrane regions (helical) follow at residues 53 to 73 (GMYA…EWLA) and 106 to 126 (YLVI…AIFG).

It belongs to the copper transporter (Ctr) (TC 1.A.56) family. SLC31A subfamily. As to expression, highly expressed in roots and at lower levels in leaves, stems and flowers.

Its subcellular location is the membrane. Its function is as follows. Involved in the transport of copper. The sequence is that of Copper transporter 4 (COPT4) from Arabidopsis thaliana (Mouse-ear cress).